The sequence spans 361 residues: Mannose-1-phosphate guanyltransferase (361 aa).

Belongs to the transferase hexapeptide repeat family.

The protein resides in the cytoplasm. The enzyme catalyses alpha-D-mannose 1-phosphate + GTP + H(+) = GDP-alpha-D-mannose + diphosphate. Its pathway is nucleotide-sugar biosynthesis; GDP-alpha-D-mannose biosynthesis; GDP-alpha-D-mannose from alpha-D-mannose 1-phosphate (GTP route): step 1/1. Its function is as follows. Involved in cell wall synthesis where it is required for glycosylation. Involved in cell cycle progression through cell-size checkpoint. This Eremothecium gossypii (strain ATCC 10895 / CBS 109.51 / FGSC 9923 / NRRL Y-1056) (Yeast) protein is Mannose-1-phosphate guanyltransferase (MPG1).